A 449-amino-acid chain; its full sequence is UDP-N-acetylmuramoylalanine--D-glutamate ligase (449 aa).

118–124 (GSNGKTT) contributes to the ATP binding site.

This sequence belongs to the MurCDEF family.

The protein localises to the cytoplasm. It catalyses the reaction UDP-N-acetyl-alpha-D-muramoyl-L-alanine + D-glutamate + ATP = UDP-N-acetyl-alpha-D-muramoyl-L-alanyl-D-glutamate + ADP + phosphate + H(+). It functions in the pathway cell wall biogenesis; peptidoglycan biosynthesis. Functionally, cell wall formation. Catalyzes the addition of glutamate to the nucleotide precursor UDP-N-acetylmuramoyl-L-alanine (UMA). The chain is UDP-N-acetylmuramoylalanine--D-glutamate ligase from Leuconostoc citreum (strain KM20).